The chain runs to 291 residues: 33 kDa chaperonin (291 aa).

2 disulfides stabilise this stretch: C229–C231 and C262–C265.

The protein belongs to the HSP33 family. Under oxidizing conditions two disulfide bonds are formed involving the reactive cysteines. Under reducing conditions zinc is bound to the reactive cysteines and the protein is inactive.

The protein localises to the cytoplasm. Redox regulated molecular chaperone. Protects both thermally unfolding and oxidatively damaged proteins from irreversible aggregation. Plays an important role in the bacterial defense system toward oxidative stress. In Aliivibrio fischeri (strain ATCC 700601 / ES114) (Vibrio fischeri), this protein is 33 kDa chaperonin.